A 184-amino-acid polypeptide reads, in one-letter code: Probable RNA 2'-phosphotransferase (184 aa).

This sequence belongs to the KptA/TPT1 family.

Functionally, removes the 2'-phosphate from RNA via an intermediate in which the phosphate is ADP-ribosylated by NAD followed by a presumed transesterification to release the RNA and generate ADP-ribose 1''-2''-cyclic phosphate (APPR&gt;P). May function as an ADP-ribosylase. This is Probable RNA 2'-phosphotransferase from Escherichia coli O9:H4 (strain HS).